The following is a 535-amino-acid chain: MKTKYIFVTGGVVSSLGKGITAASLGRLLKNRGLKVSIQKFDPYINVDPGTMSPYQHGEVFVTDDGAETDLDLGHYERFIDENLSKNSNVTTGKVYWSVINKERRGDYLGGTVQVIPHITNELKERVYRVAKEKDVDVVITEIGGTVGDIESLPFLEAIRQIKYEVGFGNSCFIHVTLLPYLRKAGEIKTKPTQHSVKELRGIGIQPDIIVCRTEKEISKDVRSKIGLFCNIDGDSVISNLDAENLYEVPLMLHDQGLDSLVCKKLELECQEVDNSEWESMVKNIKSLSGEVTIGLVGKYVELHDAYISVVESLNHGGFANNVSVNVKWINSEEVTKDNVDSVLSDVDGILVPGGFGDRGIEGKIEAIRWARENKIPFFGICLGMQCAVIEYARNVLGLEGAHSSEIDPQTKYPVIDLMPDQKDIDDKGGTMRLGLYACKLSKDTNAYDAYEEEVIYERHRHRYEFNNEFRKRLTEEGLILAGTSPDDRLVEIVEIKDHPWFVGVQFHPEFKSRPNRPHALFRDFIKVACTVKEK.

Residues 1–268 are amidoligase domain; the sequence is MKTKYIFVTG…DSLVCKKLEL (268 aa). Residue S14 participates in CTP binding. A UTP-binding site is contributed by S14. 15–20 lines the ATP pocket; the sequence is SLGKGI. Y55 lines the L-glutamine pocket. D72 is an ATP binding site. D72 and E142 together coordinate Mg(2+). Residues 149–151, 189–194, and K225 contribute to the CTP site; these read DIE and KTKPTQ. UTP contacts are provided by residues 189–194 and K225; that span reads KTKPTQ. The 243-residue stretch at 293–535 folds into the Glutamine amidotransferase type-1 domain; sequence TIGLVGKYVE…IKVACTVKEK (243 aa). G355 serves as a coordination point for L-glutamine. C382 (nucleophile; for glutamine hydrolysis) is an active-site residue. Residues 383-386, E406, and R463 contribute to the L-glutamine site; that span reads LGMQ. Active-site residues include H508 and E510.

It belongs to the CTP synthase family. As to quaternary structure, homotetramer.

The catalysed reaction is UTP + L-glutamine + ATP + H2O = CTP + L-glutamate + ADP + phosphate + 2 H(+). The enzyme catalyses L-glutamine + H2O = L-glutamate + NH4(+). It carries out the reaction UTP + NH4(+) + ATP = CTP + ADP + phosphate + 2 H(+). Its pathway is pyrimidine metabolism; CTP biosynthesis via de novo pathway; CTP from UDP: step 2/2. With respect to regulation, allosterically activated by GTP, when glutamine is the substrate; GTP has no effect on the reaction when ammonia is the substrate. The allosteric effector GTP functions by stabilizing the protein conformation that binds the tetrahedral intermediate(s) formed during glutamine hydrolysis. Inhibited by the product CTP, via allosteric rather than competitive inhibition. Functionally, catalyzes the ATP-dependent amination of UTP to CTP with either L-glutamine or ammonia as the source of nitrogen. Regulates intracellular CTP levels through interactions with the four ribonucleotide triphosphates. The chain is CTP synthase from Clostridium acetobutylicum (strain ATCC 824 / DSM 792 / JCM 1419 / IAM 19013 / LMG 5710 / NBRC 13948 / NRRL B-527 / VKM B-1787 / 2291 / W).